Reading from the N-terminus, the 1154-residue chain is Voltage-dependent calcium channel subunit alpha-2/delta-2 (1154 aa).

A signal peptide spans 1–18 (MAVPARTCGASWPGPVRT). Residues 1 to 37 (MAVPARTCGASWPGPVRTARPWPGRGPRPCPDPRGPA) are disordered. Residues 19 to 1116 (ARPWPGRGPR…TEDTSDCGRG (1098 aa)) are Extracellular-facing. Over residues 24 to 34 (GRGPRPCPDPR) the composition is skewed to pro residues. N-linked (GlcNAc...) asparagine glycosylation occurs at asparagine 205. A VWFA domain is found at 294-472 (DMVIIVDVSG…INTQEYLDVL (179 aa)). Aspartate 300, serine 302, and serine 304 together coordinate a divalent metal cation. The short motif at 300–304 (DVSGS) is the MIDAS-like motif element. Asparagine 389, asparagine 421, asparagine 510, asparagine 543, asparagine 627, and asparagine 864 each carry an N-linked (GlcNAc...) asparagine glycan. The cysteines at positions 446 and 1101 are disulfide-linked. A Cache domain is found at 488–577 (WTNVYEDALG…KPQTTNFREP (90 aa)). The chain crosses the membrane as a helical span at residues 1117-1137 (ASFPPSLGVLVSLQLLLLLGL). Topologically, residues 1138–1154 (PPRPQPQVHSFAASRHL) are cytoplasmic.

The protein belongs to the calcium channel subunit alpha-2/delta family. As to quaternary structure, dimer formed of alpha-2-2 and delta-2 chains; disulfide-linked. Voltage-dependent calcium channels are multisubunit complexes, consisting of alpha-1 (CACNA1), alpha-2 (CACNA2D), beta (CACNB) and delta (CACNA2D) subunits in a 1:1:1:1 ratio. N-glycosylated. In terms of processing, may be proteolytically processed into subunits alpha-2-2 and delta-2 that are disulfide-linked. It is however unclear whether such cleavage really takes place in vivo and has a functional role. According to PubMed:11306709, it is processed, at least in vitro, while according to PubMed:17052222, it is only poorly processed in vivo. Predominantly expressed in brain in a restricted pattern. Also expressed at lower level in kidney and testis Not expressed in lung at any moment of development. In brain, it localizes to sections of P21 brain. Expressed at high level in the cerebellum, with moderate levels in medulla, pons, and striatum. Also expressed in cortex, hippocampus, habenula and nucleus reticularis thalami (nRT). Strongly expressed in cerebellar Purkinje cells.

Its subcellular location is the membrane. In terms of biological role, the alpha-2/delta subunit of voltage-dependent calcium channels regulates calcium current density and activation/inactivation kinetics of the calcium channel. Acts as a regulatory subunit for P/Q-type calcium channel (CACNA1A), N-type (CACNA1B), L-type (CACNA1C OR CACNA1D) and possibly T-type (CACNA1G). The sequence is that of Voltage-dependent calcium channel subunit alpha-2/delta-2 (Cacna2d2) from Mus musculus (Mouse).